A 31-amino-acid chain; its full sequence is Cytochrome b6-f complex subunit 6 (31 aa).

Residues 4–24 (ITSYFGFLLAALTITSALFIG) form a helical membrane-spanning segment.

This sequence belongs to the PetL family. As to quaternary structure, the 4 large subunits of the cytochrome b6-f complex are cytochrome b6, subunit IV (17 kDa polypeptide, PetD), cytochrome f and the Rieske protein, while the 4 small subunits are PetG, PetL, PetM and PetN. The complex functions as a dimer.

The protein localises to the plastid. It is found in the chloroplast thylakoid membrane. Component of the cytochrome b6-f complex, which mediates electron transfer between photosystem II (PSII) and photosystem I (PSI), cyclic electron flow around PSI, and state transitions. PetL is important for photoautotrophic growth as well as for electron transfer efficiency and stability of the cytochrome b6-f complex. This is Cytochrome b6-f complex subunit 6 from Humulus lupulus (European hop).